A 432-amino-acid polypeptide reads, in one-letter code: Peptidyl-prolyl cis-trans isomerase cyp6 (432 aa).

The region spanning 1–168 (MSVLIETTVG…RDIRIKHTII (168 aa)) is the PPIase cyclophilin-type domain. Serine 206 is subject to Phosphoserine. The 79-residue stretch at 244-322 (NVLFVCKLNP…SRIHVDFSQS (79 aa)) folds into the RRM domain. The interval 330–432 (YNSNRDRKRS…DRRYRDDRYR (103 aa)) is disordered. 3 stretches are compositionally biased toward basic and acidic residues: residues 341 to 366 (SRSDDREYHRRSDGRYDRSNYRDDYR), 373 to 395 (DHRDDQSSFRNERFSNYYGDDRS), and 406 to 432 (NCDDHLRDKSPERRYRYDRRYRDDRYR).

The protein belongs to the cyclophilin-type PPIase family. PPIL4 subfamily.

It is found in the nucleus. It catalyses the reaction [protein]-peptidylproline (omega=180) = [protein]-peptidylproline (omega=0). In terms of biological role, PPIases accelerate the folding of proteins. It catalyzes the cis-trans isomerization of proline imidic peptide bonds in oligopeptides. The sequence is that of Peptidyl-prolyl cis-trans isomerase cyp6 (cyp6) from Schizosaccharomyces pombe (strain 972 / ATCC 24843) (Fission yeast).